We begin with the raw amino-acid sequence, 702 residues long: Putative endo-beta-N-acetylglucosaminidase (702 aa).

Residues 1–23 (MKKVRFIFLALLFFLASPEGAMA) form the signal peptide. Cell wall-binding repeat units follow at residues 42-63 (ANEW…DANY), 65-84 (ENEW…GGYM), 86-105 (KSEW…DGKM), 124-145 (IEDW…DGQH), 147-166 (EKEW…GGYL), 185-206 (QQGW…NGNY), 208-227 (DKEW…GGYM), 229-248 (ANEW…DGKI), 250-271 (EKEW…GGYM), 273-292 (ANEW…DGKM), 294-315 (EKEW…GGYM), 317-336 (ANEW…DGKI), 338-359 (EKEW…GGYM), 361-380 (ANEW…DGKM), and 382-403 (EKEW…GGYM).

The protein belongs to the glycosyl hydrolase 73 family.

The protein localises to the secreted. It catalyses the reaction an N(4)-(oligosaccharide-(1-&gt;3)-[oligosaccharide-(1-&gt;6)]-beta-D-Man-(1-&gt;4)-beta-D-GlcNAc-(1-&gt;4)-alpha-D-GlcNAc)-L-asparaginyl-[protein] + H2O = an oligosaccharide-(1-&gt;3)-[oligosaccharide-(1-&gt;6)]-beta-D-Man-(1-&gt;4)-D-GlcNAc + N(4)-(N-acetyl-beta-D-glucosaminyl)-L-asparaginyl-[protein]. In terms of biological role, plays an important role in cell wall degradation and cell separation. This is Putative endo-beta-N-acetylglucosaminidase (lytB) from Streptococcus pneumoniae (strain ATCC BAA-255 / R6).